The sequence spans 412 residues: rRNA methyltransferase 1, mitochondrial (412 aa).

The transit peptide at M1–H20 directs the protein to the mitochondrion.

Belongs to the class IV-like SAM-binding methyltransferase superfamily. RNA methyltransferase TrmH family.

Its subcellular location is the mitochondrion. It carries out the reaction guanosine(2270) in 21S rRNA + S-adenosyl-L-methionine = 2'-O-methylguanosine(2270) in 21S rRNA + S-adenosyl-L-homocysteine + H(+). Its function is as follows. S-adenosyl-L-methionine-dependent 2'-O-ribose methyltransferase that catalyzes the formation of 2'-O-methylguanosine at position 2270 (Gm2270) in the 21S mitochondrial large subunit ribosomal RNA (mtLSU rRNA), a universally conserved modification in the peptidyl transferase domain of the mtLSU rRNA. This modification seems to be important for the normal accumulation of the mitochondrial large ribosomal subunit. This chain is rRNA methyltransferase 1, mitochondrial, found in Saccharomyces cerevisiae (strain ATCC 204508 / S288c) (Baker's yeast).